A 583-amino-acid polypeptide reads, in one-letter code: Phosphoglucomutase, cytoplasmic (583 aa).

Positions 1–20 are disordered; that stretch reads MANFKVSRVETTPFEGQKPG. 2 residues coordinate alpha-D-glucose 1,6-bisphosphate: R25 and S124. S124 serves as the catalytic Phosphoserine intermediate. Mg(2+)-binding residues include S124, D300, D302, and D304. The residue at position 124 (S124) is a Phosphoserine. Residues D304, R305, T368, E387, S389, and K400 each contribute to the alpha-D-glucose 1,6-bisphosphate site.

Belongs to the phosphohexose mutase family. As to quaternary structure, monomer. Mg(2+) is required as a cofactor.

It localises to the cytoplasm. The enzyme catalyses alpha-D-glucose 1-phosphate = alpha-D-glucose 6-phosphate. The catalysed reaction is O-phospho-L-seryl-[protein] + alpha-D-glucose 1-phosphate = alpha-D-glucose 1,6-bisphosphate + L-seryl-[protein]. It catalyses the reaction alpha-D-glucose 1,6-bisphosphate + L-seryl-[protein] = O-phospho-L-seryl-[protein] + alpha-D-glucose 6-phosphate. In terms of biological role, catalyzes the reversible isomerization of alpha-D-glucose 1-phosphate to alpha-D-glucose 6-phosphate. The mechanism proceeds via the intermediate compound alpha-D-glucose 1,6-bisphosphate. This enzyme participates in both the breakdown and synthesis of glucose. The polypeptide is Phosphoglucomutase, cytoplasmic (PGM1) (Solanum tuberosum (Potato)).